The chain runs to 192 residues: NADH-ubiquinone oxidoreductase subunit 9 (192 aa).

Belongs to the complex I 30 kDa subunit family. In terms of assembly, complex I is composed of about 30 different subunits.

Its subcellular location is the mitochondrion inner membrane. It carries out the reaction a ubiquinone + NADH + 5 H(+)(in) = a ubiquinol + NAD(+) + 4 H(+)(out). Core subunit of the mitochondrial membrane respiratory chain NADH dehydrogenase (Complex I) that is believed to belong to the minimal assembly required for catalysis. Complex I functions in the transfer of electrons from NADH to the respiratory chain. The immediate electron acceptor for the enzyme is believed to be ubiquinone. The sequence is that of NADH-ubiquinone oxidoreductase subunit 9 (NAD9) from Prototheca wickerhamii.